Here is a 137-residue protein sequence, read N- to C-terminus: Actin-depolymerizing factor 7 (137 aa).

Ser-6 carries the post-translational modification Phosphoserine. Residues 7–137 (GMAVEDECKL…SFDIIKSRAL (131 aa)) enclose the ADF-H domain.

Belongs to the actin-binding proteins ADF family. Specifically expressed in pollen.

Its subcellular location is the cytoplasm. It localises to the cytoskeleton. In terms of biological role, actin-depolymerizing protein. Severs actin filaments (F-actin) and binds to actin monomers. Binds monomeric actin (G-actin) with a marked preference for the ADP-loaded form and inhibits the rate of nucleotide exchange on G-actin. Required for pollen tube growth. Promotes turnover of longitudinal actin cables by severing actin filaments in pollen tubes. The protein is Actin-depolymerizing factor 7 (ADF7) of Arabidopsis thaliana (Mouse-ear cress).